We begin with the raw amino-acid sequence, 329 residues long: DNA-directed RNA polymerase subunit alpha (329 aa).

The tract at residues 1–233 is alpha N-terminal domain (alpha-NTD); that stretch reads MVREKVKVST…NLFIPFLHVE (233 aa). Residues 266 to 329 are alpha C-terminal domain (alpha-CTD); the sequence is TKELAFQYIF…KKILDILEKK (64 aa).

Belongs to the RNA polymerase alpha chain family. As to quaternary structure, in plastids the minimal PEP RNA polymerase catalytic core is composed of four subunits: alpha, beta, beta', and beta''. When a (nuclear-encoded) sigma factor is associated with the core the holoenzyme is formed, which can initiate transcription.

It is found in the plastid. The protein localises to the chloroplast. It carries out the reaction RNA(n) + a ribonucleoside 5'-triphosphate = RNA(n+1) + diphosphate. Functionally, DNA-dependent RNA polymerase catalyzes the transcription of DNA into RNA using the four ribonucleoside triphosphates as substrates. In Arabidopsis thaliana (Mouse-ear cress), this protein is DNA-directed RNA polymerase subunit alpha.